The chain runs to 835 residues: Toll-like receptor 4 (835 aa).

The signal sequence occupies residues 1-25 (MMPLLHLAGTLIMALFLSCLRPGSL). The Extracellular portion of the chain corresponds to 26-638 (NPCIEVLPNI…KTIISVSVVS (613 aa)). A disulfide bond links cysteine 28 and cysteine 39. 3 N-linked (GlcNAc...) asparagine glycosylation sites follow: asparagine 34, asparagine 43, and asparagine 75. LRR repeat units lie at residues 54–75 (STKN…SFTN), 78–99 (QLQW…AWHG), 102–123 (QLST…SFSG), 126–147 (NLEN…HIGQ), and 150–171 (SLKK…EYFS). Asparagine 172 carries an N-linked (GlcNAc...) asparagine glycan. 3 LRR repeats span residues 175–198 (NLEH…QFLR), 204–224 (NLSL…AFQG), and 226–247 (RLHE…MCLQ). N-linked (GlcNAc...) asparagine glycans are attached at residues asparagine 204, asparagine 237, asparagine 248, asparagine 281, and asparagine 307. An intrachain disulfide couples cysteine 280 to cysteine 304. One copy of the LRR 9 repeat lies at 372–381 (SLRYLDLSRN). Cysteine 388 and cysteine 389 form a disulfide bridge. LRR repeat units follow at residues 398–420 (NLKY…MGLE), 421–442 (ELEY…SVFL), 446–467 (KLLY…IFLG), and 470–491 (SLNT…NVFT). N-linked (GlcNAc...) asparagine glycans are attached at residues asparagine 492, asparagine 495, and asparagine 524. LRR repeat units lie at residues 495-516 (NLTF…VFDT), 519-540 (RLQL…HYKQ), and 543-564 (SLRT…LQHF). Asparagine 572 and asparagine 575 each carry an N-linked (GlcNAc...) asparagine glycan. The 52-residue stretch at 576–627 (NSVACICEYQNFLQWVKDQKMFLVNVEQMKCASPIDMKASLVLDFTNSTCYI) folds into the LRRCT domain. Cystine bridges form between cysteine 580/cysteine 606 and cysteine 582/cysteine 625. Residue asparagine 622 is glycosylated (N-linked (GlcNAc...) asparagine). Residues 639 to 659 (VLVVATVAFLIYHFYFHLILI) form a helical membrane-spanning segment. Topologically, residues 660 to 835 (AGCKKYSRGE…EEEQEATTLT (176 aa)) are cytoplasmic. Positions 670-813 (SIYDAFVIYS…IFWRRLKKAL (144 aa)) constitute a TIR domain.

This sequence belongs to the Toll-like receptor family. As to quaternary structure, belongs to the lipopolysaccharide (LPS) receptor, a multi-protein complex containing at least CD14, LY96 and TLR4. Binding to bacterial LPS leads to homodimerization. Interacts with LY96 via the extracellular domain. Interacts with MYD88 and TIRAP via their respective TIR domains. Interacts with TICAM2. Interacts with NOX4. Interacts with CNPY3 and HSP90B1; this interaction is required for proper folding in the endoplasmic reticulum. Interacts with MAP3K21; this interaction leads to negative regulation of TLR4 signaling. Interacts with CD36, following CD36 stimulation by oxLDL or amyloid-beta 42, and forms a heterodimer with TLR6. The trimeric complex is internalized and triggers inflammatory response. LYN kinase activity facilitates TLR4-TLR6 heterodimerization and signal initiation. Interacts with TICAM1 in response to LPS in a WDFY1-dependent manner. Interacts with WDFY1 in response to LPS. Interacts with SMPDL3B. Interacts with CEACAM1; upon lipopolysaccharide stimulation, forms a complex including TLR4 and the phosphorylated form of SYK and CEACAM1, which in turn, recruits PTPN6 that dephosphorylates SYK, reducing the production of reactive oxygen species (ROS) and lysosome disruption, which in turn, reduces the activity of the inflammasome. Interacts with RFTN1; the interaction occurs in response to lipopolysaccharide stimulation. Interacts with SCIMP; the interaction occurs in response to lipopolysaccharide stimulation and is enhanced by phosphorylation of SCIMP by LYN. This interaction facilitates the phosphorylation of TLR4 by LYN which elicits a selective cytokine response in macrophages. Interacts with TRAF3IP3. Interacts with TREM1; this interaction enhances TLR4-mediated inflammatory response. Interacts with ZG16B/PAUF. Interacts with CD82; this interaction inhibits TLR4-mediated signaling pathway. Post-translationally, phosphorylated on tyrosine residues by LYN after binding lipopolysaccharide. In terms of processing, ubiquitinated by RNF128 via 'Lys-28'-linked polyubiquitin chains, leading to proteasomal degradation.

The protein resides in the cell membrane. It is found in the early endosome. Its subcellular location is the cell projection. The protein localises to the ruffle. In terms of biological role, transmembrane receptor that functions as a pattern recognition receptor recognizing pathogen- and damage-associated molecular patterns (PAMPs and DAMPs) to induce innate immune responses via downstream signaling pathways. At the plasma membrane, cooperates with LY96 to mediate the innate immune response to bacterial lipopolysaccharide (LPS). Also involved in LPS-independent inflammatory responses triggered by free fatty acids, such as palmitate, and Ni(2+). Mechanistically, acts via MYD88, TIRAP and TRAF6, leading to NF-kappa-B activation, cytokine secretion and the inflammatory response. Alternatively, CD14-mediated TLR4 internalization via endocytosis is associated with the initiation of a MYD88-independent signaling via the TICAM1-TBK1-IRF3 axis leading to type I interferon production. In addition to the secretion of proinflammatory cytokines, initiates the activation of NLRP3 inflammasome and formation of a positive feedback loop between autophagy and NF-kappa-B signaling cascade. In complex with TLR6, promotes inflammation in monocytes/macrophages by associating with TLR6 and the receptor CD86. Upon ligand binding, such as oxLDL or amyloid-beta 42, the TLR4:TLR6 complex is internalized and triggers inflammatory response, leading to NF-kappa-B-dependent production of CXCL1, CXCL2 and CCL9 cytokines, via MYD88 signaling pathway, and CCL5 cytokine, via TICAM1 signaling pathway. In myeloid dendritic cells, vesicular stomatitis virus glycoprotein G but not LPS promotes the activation of IRF7, leading to type I IFN production in a CD14-dependent manner. This is Toll-like receptor 4 (Tlr4) from Rattus norvegicus (Rat).